A 233-amino-acid chain; its full sequence is Ribonuclease 3 (233 aa).

In terms of domain architecture, RNase III spans 5–127; that stretch reads LERLCRKLGY…VIGAVYLDGG (123 aa). Residue Glu-40 coordinates Mg(2+). Asp-44 is an active-site residue. Residues Asp-113 and Glu-116 each contribute to the Mg(2+) site. The active site involves Glu-116. A DRBM domain is found at 156–226; it reads DPKTRLQEYL…ATRALALLLA (71 aa).

Belongs to the ribonuclease III family. Homodimer. Mg(2+) is required as a cofactor.

The protein localises to the cytoplasm. It carries out the reaction Endonucleolytic cleavage to 5'-phosphomonoester.. Digests double-stranded RNA. Involved in the processing of primary rRNA transcript to yield the immediate precursors to the large and small rRNAs (23S and 16S). Processes some mRNAs, and tRNAs when they are encoded in the rRNA operon. Processes pre-crRNA and tracrRNA of type II CRISPR loci if present in the organism. This chain is Ribonuclease 3, found in Nitrosococcus oceani (strain ATCC 19707 / BCRC 17464 / JCM 30415 / NCIMB 11848 / C-107).